Here is an 84-residue protein sequence, read N- to C-terminus: U4-theraphotoxin-Hhn1aa (84 aa).

The first 22 residues, 1 to 22 (MKVTLIAILTCAAVLVLHTTAA), serve as a signal peptide directing secretion. The propeptide occupies 23-47 (EELEESQLMEVGMPDTELAAVDEER). 2 disulfides stabilise this stretch: Cys-51-Cys-65 and Cys-55-Cys-76.

This sequence belongs to the neurotoxin 12 (Hwtx-2) family. 02 (Hwtx-2) subfamily. In terms of tissue distribution, expressed by the venom gland.

Its subcellular location is the secreted. Postsynaptic neurotoxin. The polypeptide is U4-theraphotoxin-Hhn1aa (Cyriopagopus hainanus (Chinese bird spider)).